The primary structure comprises 231 residues: MERGTIHNKGSFLSNISKNLQREMPQHVERPEWQYRPQDKTLTGLTQDELLEVLRQQCNFIHTDLVETTTDNINETLSQVIEKYGNGEVIAWNDKRFADFGIDLEAHDAFIWDEAKGAENLQVAERANVGITFSDVTLAESGTVVLYADKGKGRSVSLLPATYIAIVPKSTIVPRFTQAAQQMNAMMEDQENFPTCINLITGPSNSADIEMKLVVGVHGPIKATYIVVDDK.

Belongs to the LutC/YkgG family.

In terms of biological role, is involved in L-lactate degradation and allows cells to grow with lactate as the sole carbon source. The polypeptide is Lactate utilization protein C (Macrococcus caseolyticus (strain JCSC5402) (Macrococcoides caseolyticum)).